A 210-amino-acid chain; its full sequence is High frequency lysogenization protein HflD homolog (210 aa).

A coiled-coil region spans residues 103–130 (EAKAKLAERLQQIERQLPLYENDIMADQ).

It belongs to the HflD family.

The protein resides in the cytoplasm. Its subcellular location is the cell inner membrane. This is High frequency lysogenization protein HflD homolog from Actinobacillus pleuropneumoniae serotype 3 (strain JL03).